The sequence spans 217 residues: Urease accessory protein UreG (217 aa).

13–20 contributes to the GTP binding site; it reads GPVGSGKT.

This sequence belongs to the SIMIBI class G3E GTPase family. UreG subfamily. In terms of assembly, homodimer. UreD, UreF and UreG form a complex that acts as a GTP-hydrolysis-dependent molecular chaperone, activating the urease apoprotein by helping to assemble the nickel containing metallocenter of UreC. The UreE protein probably delivers the nickel.

The protein resides in the cytoplasm. Its function is as follows. Facilitates the functional incorporation of the urease nickel metallocenter. This process requires GTP hydrolysis, probably effectuated by UreG. This Frankia alni (strain DSM 45986 / CECT 9034 / ACN14a) protein is Urease accessory protein UreG.